The primary structure comprises 2213 residues: Protein sidekick-1 (2213 aa).

The interval 1 to 73 is disordered; it reads MARGARPSAA…GAGRCGGRRA (73 aa). Residues 23–38 are compositionally biased toward low complexity; that stretch reads AGPGRPRGSPPGRARP. Ig-like C2-type domains lie at 104 to 186, 191 to 277, 293 to 378, 386 to 476, and 480 to 569; these read PYFK…SEVQ, GSFM…SPFI, PTIV…RATA, PYFT…LDVT, and PVFT…ATLT. A disulfide bridge links Cys-126 with Cys-169. 2 N-linked (GlcNAc...) asparagine glycosylation sites follow: Asn-271 and Asn-301. 3 disulfides stabilise this stretch: Cys-315–Cys-362, Cys-408–Cys-458, and Cys-501–Cys-553. N-linked (GlcNAc...) asparagine glycosylation is found at Asn-550, Asn-563, and Asn-572. Residues 574–663 enclose the Ig-like C2-type 6 domain; that stretch reads TSIVHPPEDH…GNDSRMARLE (90 aa). A disulfide bridge links Cys-595 with Cys-647. 7 N-linked (GlcNAc...) asparagine glycosylation sites follow: Asn-655, Asn-679, Asn-782, Asn-821, Asn-882, Asn-1015, and Asn-1024. Fibronectin type-III domains are found at residues 670–766, 771–867, 872–970, 974–1068, 1072–1171, 1176–1274, 1279–1376, 1380–1474, 1479–1576, 1581–1699, 1704–1800, 1804–1899, and 1902–2000; these read SPQN…LPEE, PPKN…TLQG, PPQN…TQED, AVGH…VPPD, APSN…TLQA, APTS…TRES, APEN…TKDD, PPVR…TEKR, PPRE…TLQD, PPGS…VGEA, APQN…THQA, APSF…AGPA, and SPGS…SAQV. 2 N-linked (GlcNAc...) asparagine glycosylation sites follow: Asn-1282 and Asn-1333. 5 N-linked (GlcNAc...) asparagine glycosylation sites follow: Asn-1654, Asn-1748, Asn-1767, Asn-1819, and Asn-1893. A helical membrane pass occupies residues 2010 to 2030; sequence FLLVMALSSLIVILLVVFALV. Residues 2031–2213 are Cytoplasmic-facing; sequence LHGQNKKYKN…TPLTGFSSFV (183 aa). The segment at 2075-2098 is disordered; the sequence is STFSKKNGTRSPPRPSPGGLHYSD. Residues 2207–2213 carry the PDZ-binding motif; sequence TGFSSFV.

It belongs to the sidekick family. As to quaternary structure, homodimer; mediates homophilic interactions to promote cell adhesion. Up-regulated in glomeruli in HIV-associated nephropathy. In diseased glomeruli, significantly overexpressed and the expression is no longer restricted to mesangial cells but includes podocytes and parietal epithelial cells.

The protein localises to the cell membrane. It localises to the synapse. Its function is as follows. Adhesion molecule that promotes lamina-specific synaptic connections in the retina. Expressed in specific subsets of interneurons and retinal ganglion cells (RGCs) and promotes synaptic connectivity via homophilic interactions. This is Protein sidekick-1 from Homo sapiens (Human).